The primary structure comprises 161 residues: Endoribonuclease YbeY (161 aa).

Residues H127, H131, and H137 each coordinate Zn(2+).

Belongs to the endoribonuclease YbeY family. Zn(2+) serves as cofactor.

The protein localises to the cytoplasm. Single strand-specific metallo-endoribonuclease involved in late-stage 70S ribosome quality control and in maturation of the 3' terminus of the 16S rRNA. This is Endoribonuclease YbeY from Listeria welshimeri serovar 6b (strain ATCC 35897 / DSM 20650 / CCUG 15529 / CIP 8149 / NCTC 11857 / SLCC 5334 / V8).